The following is a 625-amino-acid chain: MSVHGRFPASPPISLSPSSSSTSPSSQSPSTPPDLKQRVIACLNKLADRDTLALASAELDSIARNLTHDSFSPFLNCIHNTDSSVKSPVRKQCVALLSVLSRYHGDSLTPHLAKMVSTVIRRLRDPDSSVRSACAVATADMSAHVTRQPFASVAKPLIETLIQEGDSNLQIGAALCLAASVDAATDPESEQLRKSLPKIGKLLKSDGFKAKAALLSAVGSIITAGGAGTKPVLDWLVPVLIEFLSSEDWAARKSAAEALGKVATAEDLASQYKKTCTTALESRRFDKVKSVRETMNRALNLWKEVSTDDEASLSPSRSSTDDGNIGCFSSVTRSSTIDVGLKSARPKKVTPIMKRSPSLPVNRSYAATRQKENLPKRNQGNMTMLVEEASSVDNKGPHFTPVKKSSEETEEKANSGGPDIIKHTISEKSREDSKVSSFGGLRSGSRVAPCSDDGDSVKNCKDDVEESKKDSEELSLIREQLALIENQQSSLLDLLQKFMGTSQSGIQSLESRVSGLEMALDEISCDLAVSNGRVPRNSSGCAGDSCSKLPGTEFLSPKFWRKTEERPRNRNTANEMAAYDQGMRESTDTNNGQRGGSVFQKRSRRDQFQDCMHTTLQKPTTRLST.

Residues 1 to 34 form a disordered region; that stretch reads MSVHGRFPASPPISLSPSSSSTSPSSQSPSTPPD. Residues 12–29 are compositionally biased toward low complexity; sequence PISLSPSSSSTSPSSQSP. HEAT repeat units lie at residues 69–106, 110–147, 149–186, 190–227, and 230–268; these read DSFS…YHGD, PHLA…HVTR, PFAS…AATD, EQLR…AGGA, and KPVL…AEDL. The segment at 391 to 466 is disordered; that stretch reads SVDNKGPHFT…VKNCKDDVEE (76 aa). Basic and acidic residues-rich tracts occupy residues 404–413, 420–434, and 455–466; these read KSSEETEEKA, IIKH…EDSK, and DSVKNCKDDVEE. The residue at position 475 (S475) is a Phosphoserine. A disordered region spans residues 582–625; sequence GMRESTDTNNGQRGGSVFQKRSRRDQFQDCMHTTLQKPTTRLST. Polar residues predominate over residues 612–625; the sequence is MHTTLQKPTTRLST.

The polypeptide is TORTIFOLIA1-like protein 4 (Arabidopsis thaliana (Mouse-ear cress)).